We begin with the raw amino-acid sequence, 552 residues long: Solute carrier family 22 member 6-B (552 aa).

Residues 1 to 16 (MAFQEILESLGGMGRY) lie on the Cytoplasmic side of the membrane. A helical transmembrane segment spans residues 17–37 (QVIHVVLLSLPVFMLASHNLM). Topologically, residues 38–137 (QNFTAATPSH…LVCNHRRMRQ (100 aa)) are extracellular. A helical transmembrane segment spans residues 138–158 (VAQSIYMAGVLVGSILFGGLS). The Cytoplasmic segment spans residues 159–164 (DKFGRR). A helical membrane pass occupies residues 165–184 (PLNIWSNLQMFVTGICAAFS). P185 is a topological domain (extracellular). The helical transmembrane segment at 186-206 (NYIWYCIFRFLTGVAFSGIVL) threads the bilayer. The Cytoplasmic segment spans residues 207–225 (NSYSLTVEWIPTGNRAFTS). The chain crosses the membrane as a helical span at residues 226-246 (TATGYCYTMGQLVLVGLAFII). Residues 247-250 (RDWQ) lie on the Extracellular side of the membrane. The helical transmembrane segment at 251 to 271 (WLQLAASIPFFFYFLYSWWIP) threads the bilayer. Topologically, residues 272-336 (ESGRWLVLSG…YSALDLVRTP (65 aa)) are cytoplasmic. A helical transmembrane segment spans residues 337-356 (VVRRISFCISCTWFSTSFAY). Position 357 (Y357) is a topological domain, extracellular. A helical transmembrane segment spans residues 358–378 (GLALDLQSFGVSIYIIQIIFG). Topologically, residues 379–398 (TVDIPAKFISYFITTYVGRR) are cytoplasmic. Residues 399–419 (VSQAITLILAGIAILVNISVP) traverse the membrane as a helical segment. At 420-426 (QDFQTVR) the chain is on the extracellular side. The chain crosses the membrane as a helical span at residues 427 to 447 (TAMAVFGKGCLAASFNCLYLY). Residues 448–459 (TGELYPTVIRQT) are Cytoplasmic-facing. A helical transmembrane segment spans residues 460–480 (GMGLGAMMARLGGIIAPLAQM). Over 481-487 (TGDIYHS) the chain is Extracellular. The helical transmembrane segment at 488–508 (LPLIIFGCLPILSGIAGCFLP) threads the bilayer. Residues 509-552 (ETLGVPLPETIEEVESPDKQQKDVNVSAKIPLKETELYNMKTDV) lie on the Cytoplasmic side of the membrane.

It belongs to the major facilitator (TC 2.A.1) superfamily. Organic cation transporter (TC 2.A.1.19) family. In terms of processing, glycosylated. Glycosylation is necessary for proper targeting of the transporter to the plasma membrane.

The protein localises to the cell membrane. Its subcellular location is the basolateral cell membrane. It localises to the basal cell membrane. Involved in the renal elimination of endogenous and exogenous organic anions. Mediates the sodium-independent uptake of p-aminohippurate (PAH), cidofovir, adefovir, 9-(2-phosphonylmethoxyethyl) guanine (PMEG), 9-(2-phosphonylmethoxyethyl) diaminopurine (PMEDAP) and edaravone sulfate. PAH uptake is inhibited by furosemide, steviol, phorbol 12-myristate 13-acetate (PMA), calcium ionophore A23187, benzylpenicillin, furosemide, indomethacin, bumetamide, losartan, probenecid, phenol red, urate, and alpha-ketoglutarate. This chain is Solute carrier family 22 member 6-B (slc22a6-b), found in Xenopus laevis (African clawed frog).